We begin with the raw amino-acid sequence, 491 residues long: Probable cytosol aminopeptidase (491 aa).

The Mn(2+) site is built by lysine 263 and aspartate 268. Residue lysine 275 is part of the active site. Residues aspartate 286, aspartate 345, and glutamate 347 each contribute to the Mn(2+) site. The active site involves arginine 349.

The protein belongs to the peptidase M17 family. Requires Mn(2+) as cofactor.

The protein localises to the cytoplasm. It catalyses the reaction Release of an N-terminal amino acid, Xaa-|-Yaa-, in which Xaa is preferably Leu, but may be other amino acids including Pro although not Arg or Lys, and Yaa may be Pro. Amino acid amides and methyl esters are also readily hydrolyzed, but rates on arylamides are exceedingly low.. It carries out the reaction Release of an N-terminal amino acid, preferentially leucine, but not glutamic or aspartic acids.. Its function is as follows. Presumably involved in the processing and regular turnover of intracellular proteins. Catalyzes the removal of unsubstituted N-terminal amino acids from various peptides. The polypeptide is Probable cytosol aminopeptidase (Haemophilus influenzae (strain PittGG)).